A 93-amino-acid polypeptide reads, in one-letter code: Small ribosomal subunit protein bS20 (93 aa).

The span at 1–11 (MPQHKSAEKRV) shows a compositional bias: basic and acidic residues. The interval 1–23 (MPQHKSAEKRVRQSKRRNARNRV) is disordered. Basic residues predominate over residues 12-23 (RQSKRRNARNRV).

The protein belongs to the bacterial ribosomal protein bS20 family.

Functionally, binds directly to 16S ribosomal RNA. In Chloroherpeton thalassium (strain ATCC 35110 / GB-78), this protein is Small ribosomal subunit protein bS20.